The chain runs to 206 residues: LexA repressor (206 aa).

A DNA-binding region (H-T-H motif) is located at residues 28 to 48; it reads RAEIATRLGFKSANAAEEHLK. Catalysis depends on for autocatalytic cleavage activity residues S123 and K160.

The protein belongs to the peptidase S24 family. Homodimer.

The enzyme catalyses Hydrolysis of Ala-|-Gly bond in repressor LexA.. Functionally, represses a number of genes involved in the response to DNA damage (SOS response), including recA and lexA. In the presence of single-stranded DNA, RecA interacts with LexA causing an autocatalytic cleavage which disrupts the DNA-binding part of LexA, leading to derepression of the SOS regulon and eventually DNA repair. This Shewanella sp. (strain MR-7) protein is LexA repressor.